An 89-amino-acid polypeptide reads, in one-letter code: Small ribosomal subunit protein uS19 (89 aa).

This sequence belongs to the universal ribosomal protein uS19 family.

Its function is as follows. Protein S19 forms a complex with S13 that binds strongly to the 16S ribosomal RNA. The sequence is that of Small ribosomal subunit protein uS19 from Stenotrophomonas maltophilia (strain R551-3).